A 461-amino-acid polypeptide reads, in one-letter code: uncharacterized protein (461 aa).

13 helical membrane-spanning segments follow: residues 13-33 (GIIF…LPFE), 54-74 (ALHV…LGLV), 81-101 (VGFA…ATAL), 120-140 (GNLF…SMWM), 170-190 (VFVL…TLVG), 211-231 (YGLP…YIIF), 256-276 (FIIF…NPFI), 286-306 (IASF…STGV), 314-334 (SNTD…SAVL), 349-369 (FMID…FIIF), 377-397 (TASA…LGMP), 399-419 (IGLA…PVAT), and 439-459 (VGFL…YMFW).

The protein belongs to the SLC13A/DASS transporter (TC 2.A.47) family. NADC subfamily.

Its subcellular location is the cell membrane. This is an uncharacterized protein from Haemophilus influenzae (strain ATCC 51907 / DSM 11121 / KW20 / Rd).